We begin with the raw amino-acid sequence, 75 residues long: RNA-binding protein KhpA (75 aa).

One can recognise a KH domain in the interval Ser-29–Ile-75.

This sequence belongs to the KhpA RNA-binding protein family. In terms of assembly, forms a complex with KhpB.

The protein resides in the cytoplasm. Its function is as follows. A probable RNA chaperone. Forms a complex with KhpB which binds to cellular RNA and controls its expression. Plays a role in peptidoglycan (PG) homeostasis and cell length regulation. This chain is RNA-binding protein KhpA, found in Clostridium acetobutylicum (strain ATCC 824 / DSM 792 / JCM 1419 / IAM 19013 / LMG 5710 / NBRC 13948 / NRRL B-527 / VKM B-1787 / 2291 / W).